Reading from the N-terminus, the 254-residue chain is Homeobox protein Dlx4b (254 aa).

Residues 129–188 (IRKPRTIYSSVQLQALHQRFQQTQYLALPERADLAAKLGLTQTQVKIWFQNKRSKYKKIM) constitute a DNA-binding region (homeobox).

The protein belongs to the distal-less homeobox family.

The protein resides in the nucleus. In terms of biological role, during larvae development, may be important for neurocranium morphogenesis. This chain is Homeobox protein Dlx4b (dlx4b), found in Danio rerio (Zebrafish).